Reading from the N-terminus, the 637-residue chain is 1-deoxy-D-xylulose-5-phosphate synthase (637 aa).

Residues His-73 and 113 to 115 (SHA) each bind thiamine diphosphate. Mg(2+) is bound at residue Asp-145. Thiamine diphosphate contacts are provided by residues 146–147 (GA), Asn-175, Tyr-286, and Glu-367. Asn-175 provides a ligand contact to Mg(2+).

Belongs to the transketolase family. DXPS subfamily. In terms of assembly, homodimer. It depends on Mg(2+) as a cofactor. Requires thiamine diphosphate as cofactor.

The enzyme catalyses D-glyceraldehyde 3-phosphate + pyruvate + H(+) = 1-deoxy-D-xylulose 5-phosphate + CO2. It participates in metabolic intermediate biosynthesis; 1-deoxy-D-xylulose 5-phosphate biosynthesis; 1-deoxy-D-xylulose 5-phosphate from D-glyceraldehyde 3-phosphate and pyruvate: step 1/1. Functionally, catalyzes the acyloin condensation reaction between C atoms 2 and 3 of pyruvate and glyceraldehyde 3-phosphate to yield 1-deoxy-D-xylulose-5-phosphate (DXP). The protein is 1-deoxy-D-xylulose-5-phosphate synthase of Thermobifida fusca (strain YX).